The sequence spans 383 residues: E3 ubiquitin-protein ligase Os04g0590900 (383 aa).

The chain crosses the membrane as a helical span at residues 53-73; that stretch reads PVFSPLVIAIIGVLASAFLLV. The interval 105-129 is disordered; the sequence is GGAGSGGRHGHGQSRSHESWNVSPP. The RING-type; atypical zinc-finger motif lies at 157-199; that stretch reads CSVCLGEFSDGESLRLLPRCSHAFHQQCIDTWLKSHSNCPLCR. Disordered stretches follow at residues 269 to 291 and 320 to 383; these read EANGAAEIREEGSPPKRGASSFD and LLAG…DHPM.

It localises to the membrane. The catalysed reaction is S-ubiquitinyl-[E2 ubiquitin-conjugating enzyme]-L-cysteine + [acceptor protein]-L-lysine = [E2 ubiquitin-conjugating enzyme]-L-cysteine + N(6)-ubiquitinyl-[acceptor protein]-L-lysine.. Its pathway is protein modification; protein ubiquitination. Possesses E3 ubiquitin-protein ligase in vitro. The protein is E3 ubiquitin-protein ligase Os04g0590900 of Oryza sativa subsp. japonica (Rice).